The sequence spans 149 residues: Histone H2B.3, sperm (149 aa).

The segment at 1 to 57 is disordered; it reads MPRSPAKTSPRKGSPRKGSPRKGSPSRKASPKRGGKGAKRAGKGGRRRRVVKRRRRR. 6 short sequence motifs (SPKK motif) span residues 4–7, 9–12, 14–17, 19–22, 24–27, and 30–33; these read SPAK, SPRK, SPSR, and SPKR. The span at 9 to 20 shows a compositional bias: basic residues; sequence SPRKGSPRKGSP. A phosphoserine mark is found at Ser19, Ser24, and Ser30. Positions 29–57 are enriched in basic residues; it reads ASPKRGGKGAKRAGKGGRRRRVVKRRRRR. Ser136 is a glycosylation site (O-linked (GlcNAc) serine). Lys144 participates in a covalent cross-link: Glycyl lysine isopeptide (Lys-Gly) (interchain with G-Cter in ubiquitin).

It belongs to the histone H2B family. In terms of assembly, the nucleosome is a histone octamer containing two molecules each of H2A, H2B, H3 and H4 assembled in one H3-H4 heterotetramer and two H2A-H2B heterodimers. The octamer wraps approximately 147 bp of DNA. In terms of processing, monoubiquitination of Lys-144 gives a specific tag for epigenetic transcriptional activation and is also prerequisite for histone H3 'Lys-4' and 'Lys-79' methylation. Phosphorylated on SPKK motifs 4, 5 and 6; which may regulate DNA binding. Dephosphorylated during maturation of spermatids to mature sperm and rephosphorylated at fertilization. Post-translationally, glcNAcylation at Ser-136 promotes monoubiquitination of Lys-144. It fluctuates in response to extracellular glucose, and associates with transcribed genes.

It is found in the nucleus. Its subcellular location is the chromosome. Its function is as follows. Core component of nucleosome. Nucleosomes wrap and compact DNA into chromatin, limiting DNA accessibility to the cellular machineries which require DNA as a template. Histones thereby play a central role in transcription regulation, DNA repair, DNA replication and chromosomal stability. DNA accessibility is regulated via a complex set of post-translational modifications of histones, also called histone code, and nucleosome remodeling. The chain is Histone H2B.3, sperm from Parechinus angulosus (Angulate sea urchin).